A 214-amino-acid polypeptide reads, in one-letter code: MADS-box protein SOC1 (214 aa).

Residues 3 to 57 (RGKTQMKRIENATSRQVTFSKRRNGLLKKAFELSVLCDAEVSLIIFSPKGKLYEF) enclose the MADS-box domain. One can recognise a K-box domain in the interval 87–177 (MQHLKYEAAN…SEKWGSHESE (91 aa)). Basic and acidic residues predominate over residues 162–177 (AENEKLSEKWGSHESE). A disordered region spans residues 162–214 (AENEKLSEKWGSHESEVWSNKNQESTGRGDEESSPSSEVETQLFIGLPCSSRK). Over residues 178 to 187 (VWSNKNQEST) the composition is skewed to polar residues.

In terms of assembly, forms a heterodimer with AGL24 through MADS-box domain. Interacts with AGL15, AGL16 and AGL19. Interacts with OXS3 in the nucleus. Widely expressed. Not found in the apical meristem of short-day grown plants in vegetative stage.

The protein resides in the nucleus. The protein localises to the cytoplasm. Functionally, transcription activator active in flowering time control. May integrate signals from the photoperiod, vernalization and autonomous floral induction pathways. Can modulate class B and C homeotic genes expression. When associated with AGL24, mediates effect of gibberellins on flowering under short-day conditions, and regulates the expression of LEAFY (LFY), which links floral induction and floral development. In Arabidopsis thaliana (Mouse-ear cress), this protein is MADS-box protein SOC1.